The chain runs to 142 residues: Small ribosomal subunit protein uS12 (142 aa).

Belongs to the universal ribosomal protein uS12 family. In terms of assembly, part of the 30S ribosomal subunit.

Functionally, with S4 and S5 plays an important role in translational accuracy. Located at the interface of the 30S and 50S subunits. The polypeptide is Small ribosomal subunit protein uS12 (Methanosarcina mazei (strain ATCC BAA-159 / DSM 3647 / Goe1 / Go1 / JCM 11833 / OCM 88) (Methanosarcina frisia)).